The chain runs to 835 residues: Phenylalanine--tRNA ligase beta subunit (835 aa).

A tRNA-binding domain is found at 44 to 160 (PATTGPLVLG…ESGQPGDDAR (117 aa)). In terms of domain architecture, B5 spans 419–494 (PTMPSITMPV…RLEGLEAIPT (76 aa)). Mg(2+)-binding residues include Asp472, Asp478, Glu481, and Glu482. Residues 741–834 (SAFPALHQDI…AKERLGAEMR (94 aa)) form the FDX-ACB domain.

It belongs to the phenylalanyl-tRNA synthetase beta subunit family. Type 1 subfamily. Tetramer of two alpha and two beta subunits. Mg(2+) is required as a cofactor.

It localises to the cytoplasm. The catalysed reaction is tRNA(Phe) + L-phenylalanine + ATP = L-phenylalanyl-tRNA(Phe) + AMP + diphosphate + H(+). The chain is Phenylalanine--tRNA ligase beta subunit from Corynebacterium efficiens (strain DSM 44549 / YS-314 / AJ 12310 / JCM 11189 / NBRC 100395).